The chain runs to 124 residues: UPF0102 protein Blon_1698/BLIJ_1758 (124 aa).

The protein belongs to the UPF0102 family.

The protein is UPF0102 protein Blon_1698/BLIJ_1758 of Bifidobacterium longum subsp. infantis (strain ATCC 15697 / DSM 20088 / JCM 1222 / NCTC 11817 / S12).